Consider the following 290-residue polypeptide: ATP synthase gamma chain (290 aa).

The protein belongs to the ATPase gamma chain family. F-type ATPases have 2 components, CF(1) - the catalytic core - and CF(0) - the membrane proton channel. CF(1) has five subunits: alpha(3), beta(3), gamma(1), delta(1), epsilon(1). CF(0) has three main subunits: a, b and c.

Its subcellular location is the cell membrane. Produces ATP from ADP in the presence of a proton gradient across the membrane. The gamma chain is believed to be important in regulating ATPase activity and the flow of protons through the CF(0) complex. The chain is ATP synthase gamma chain from Chloroflexus aurantiacus (strain ATCC 29366 / DSM 635 / J-10-fl).